The following is a 165-amino-acid chain: 3-isopropylmalate dehydratase small subunit (165 aa).

Belongs to the LeuD family. LeuD type 2 subfamily. As to quaternary structure, heterodimer of LeuC and LeuD.

The catalysed reaction is (2R,3S)-3-isopropylmalate = (2S)-2-isopropylmalate. It participates in amino-acid biosynthesis; L-leucine biosynthesis; L-leucine from 3-methyl-2-oxobutanoate: step 2/4. Its function is as follows. Catalyzes the isomerization between 2-isopropylmalate and 3-isopropylmalate, via the formation of 2-isopropylmaleate. The polypeptide is 3-isopropylmalate dehydratase small subunit (Helicobacter hepaticus (strain ATCC 51449 / 3B1)).